Reading from the N-terminus, the 836-residue chain is Ethylene receptor 3 (836 aa).

3 helical membrane-spanning segments follow: residues 137–157 (LIAA…AGLR), 166–186 (LVQF…TAFT), and 204–224 (LTAL…PQLL). Residues cysteine 176 and histidine 180 each coordinate Cu cation. In terms of domain architecture, GAF spans 269-413 (DRHTVLYTTL…VVAGQVAVAL (145 aa)). A coiled-coil region spans residues 416–452 (ATLLEESRAMRDRLAEQNRELLQARRDALMANEARQA). The Histidine kinase domain occupies 457–691 (MSQGMRRPIH…LVLRFQLQSP (235 aa)). The region spanning 718–834 (LLIDDDDDIN…LKDELARILQ (117 aa)) is the Response regulatory domain.

Belongs to the ethylene receptor family. Requires Cu cation as cofactor.

The protein resides in the endoplasmic reticulum membrane. The enzyme catalyses ATP + protein L-histidine = ADP + protein N-phospho-L-histidine.. In terms of biological role, ethylene receptor related to bacterial two-component regulators. Acts as a negative regulator of ethylene signaling. May delay the transition from the vegetative stage to the floral stage by up-regulating GI (GIGANTEA) and RCN1 and cause starch accumulation in stems by down-regulating the alpha-amylase AMY3D. In Oryza sativa subsp. japonica (Rice), this protein is Ethylene receptor 3 (ETR3).